Reading from the N-terminus, the 138-residue chain is Ribosome maturation factor RimP (138 aa).

The protein belongs to the RimP family.

The protein localises to the cytoplasm. Its function is as follows. Required for maturation of 30S ribosomal subunits. This is Ribosome maturation factor RimP from Campylobacter concisus (strain 13826).